The sequence spans 114 residues: Large ribosomal subunit protein uL22 (114 aa).

This sequence belongs to the universal ribosomal protein uL22 family. Part of the 50S ribosomal subunit.

Functionally, this protein binds specifically to 23S rRNA; its binding is stimulated by other ribosomal proteins, e.g. L4, L17, and L20. It is important during the early stages of 50S assembly. It makes multiple contacts with different domains of the 23S rRNA in the assembled 50S subunit and ribosome. Its function is as follows. The globular domain of the protein is located near the polypeptide exit tunnel on the outside of the subunit, while an extended beta-hairpin is found that lines the wall of the exit tunnel in the center of the 70S ribosome. In Ehrlichia chaffeensis (strain ATCC CRL-10679 / Arkansas), this protein is Large ribosomal subunit protein uL22.